A 44-amino-acid chain; its full sequence is Cytochrome b559 subunit beta (44 aa).

The chain crosses the membrane as a helical span at residues 19–35 (WLAVHTLAVPTVFFIGA). Heme is bound at residue H23.

Belongs to the PsbE/PsbF family. In terms of assembly, heterodimer of an alpha subunit and a beta subunit. PSII is composed of 1 copy each of membrane proteins PsbA, PsbB, PsbC, PsbD, PsbE, PsbF, PsbH, PsbI, PsbJ, PsbK, PsbL, PsbM, PsbT, PsbX, PsbY, PsbZ, Psb30/Ycf12, peripheral proteins PsbO, CyanoQ (PsbQ), PsbU, PsbV and a large number of cofactors. It forms dimeric complexes. Requires heme b as cofactor.

It localises to the cellular thylakoid membrane. Functionally, this b-type cytochrome is tightly associated with the reaction center of photosystem II (PSII). PSII is a light-driven water:plastoquinone oxidoreductase that uses light energy to abstract electrons from H(2)O, generating O(2) and a proton gradient subsequently used for ATP formation. It consists of a core antenna complex that captures photons, and an electron transfer chain that converts photonic excitation into a charge separation. This chain is Cytochrome b559 subunit beta, found in Gloeothece citriformis (strain PCC 7424) (Cyanothece sp. (strain PCC 7424)).